The chain runs to 145 residues: CBS domain-containing protein DDB_G0289609 (145 aa).

CBS domains follow at residues 9–66 (MSKS…FLPE) and 84–141 (MKQN…LEPV).

This is CBS domain-containing protein DDB_G0289609 from Dictyostelium discoideum (Social amoeba).